Reading from the N-terminus, the 246-residue chain is Chlorophyll a-b binding protein 6A, chloroplastic (246 aa).

The N-terminal 45 residues, 1-45, are a transit peptide targeting the chloroplast; it reads MASNTLMSCGIPAVCPSFLSSTKSKFAAAMPVYVGATNFMSRFSM. Tryptophan 49 serves as a coordination point for chlorophyll b. Residues phenylalanine 69, glutamate 88, and histidine 91 each contribute to the chlorophyll a site. Residue arginine 93 coordinates chlorophyll b. Residues 94-114 traverse the membrane as a helical segment; that stretch reads WAMLAVPGIIVPEALGLGNWV. Leucine 130 provides a ligand contact to chlorophyll a. Residues 133–153 traverse the membrane as a helical segment; sequence PVPWGTLPTILAIEFLAIAFV. Chlorophyll b-binding residues include valine 134, glutamate 154, and arginine 157. Chlorophyll a is bound by residues lysine 191, glutamate 192, asparagine 195, arginine 197, glutamine 209, and histidine 225.

Belongs to the light-harvesting chlorophyll a/b-binding (LHC) protein family. The LHC complex consists of chlorophyll a-b binding proteins. The cofactor is Binds at least 14 chlorophylls (8 Chl-a and 6 Chl-b) and carotenoids such as lutein and neoxanthin.. In terms of processing, photoregulated by reversible phosphorylation of its threonine residues.

It localises to the plastid. Its subcellular location is the chloroplast thylakoid membrane. The light-harvesting complex (LHC) functions as a light receptor, it captures and delivers excitation energy to photosystems with which it is closely associated. This Solanum lycopersicum (Tomato) protein is Chlorophyll a-b binding protein 6A, chloroplastic (CAB6A).